Here is a 310-residue protein sequence, read N- to C-terminus: Olfactory receptor 10G2 (310 aa).

Topologically, residues 1 to 29 (MGKTKNTSLDAVVTDFILLGLSHPPNLRS) are extracellular. Residue Asn6 is glycosylated (N-linked (GlcNAc...) asparagine). A helical transmembrane segment spans residues 30 to 50 (LLFLVFFIIYILTQLGNLLIL). Residues 51 to 58 (LTMWADPK) are Cytoplasmic-facing. The helical transmembrane segment at 59-80 (LCARPMYILLGVLSFLDMWLSS) threads the bilayer. Residues 81 to 104 (VTVPLLILDFTPSIKAIPFGGCVA) are Extracellular-facing. A disulfide bridge connects residues Cys102 and Cys194. Residues 105–125 (QLYFFHFLGSTQCFLYTLMAY) form a helical membrane-spanning segment. The Cytoplasmic portion of the chain corresponds to 126–144 (DRYLAICQPLRYPVLMNGR). A helical membrane pass occupies residues 145–165 (LCTVLVAGAWVAGSMHGSIQA). Topologically, residues 166 to 202 (TLTFRLPYCGPNQVDYFICDIPAVLRLACADTTVNEL) are extracellular. The chain crosses the membrane as a helical span at residues 203-222 (VTFVDVGVVAASCFMLILLS). The Cytoplasmic segment spans residues 223–242 (YANIVNAILKIRTTDGRRRA). The helical transmembrane segment at 243-263 (FSTCGSHLIVVTVYYVPCIFI) threads the bilayer. Residues 264–274 (YLRAGSKDPLD) are Extracellular-facing. Residues 275–295 (GAAAVFYTVVTPLLNPLIYTL) form a helical membrane-spanning segment. Topologically, residues 296 to 310 (RNQEVKSALKRITAG) are cytoplasmic.

Belongs to the G-protein coupled receptor 1 family.

It is found in the cell membrane. Odorant receptor. In Homo sapiens (Human), this protein is Olfactory receptor 10G2 (OR10G2).